Here is a 133-residue protein sequence, read N- to C-terminus: Small ribosomal subunit protein bS6 (133 aa).

The protein belongs to the bacterial ribosomal protein bS6 family.

Functionally, binds together with bS18 to 16S ribosomal RNA. This is Small ribosomal subunit protein bS6 from Chlorobium luteolum (strain DSM 273 / BCRC 81028 / 2530) (Pelodictyon luteolum).